A 772-amino-acid chain; its full sequence is Heat shock protein 88 (772 aa).

2 disordered regions span residues 496-519 (TAAP…AEEK) and 729-772 (LGKP…DILD). Over residues 497 to 513 (AAPAETPAETPANGEAA) the composition is skewed to low complexity. Positions 735-772 (KPVEVPKEEPKDTPMESKDAPAEEPVATKDQKMDDILD) are enriched in basic and acidic residues.

It belongs to the heat shock protein 70 family.

Its function is as follows. May function in protein folding and assembly, and disassembly of protein complexes. The sequence is that of Heat shock protein 88 (hspH) from Dictyostelium discoideum (Social amoeba).